The primary structure comprises 206 residues: Large ribosomal subunit protein bL25 (206 aa).

The disordered stretch occupies residues 184–206 (AEEAAAEVAEPEVIKKGKEEEEE). Basic and acidic residues predominate over residues 195–206 (EVIKKGKEEEEE).

The protein belongs to the bacterial ribosomal protein bL25 family. CTC subfamily. In terms of assembly, part of the 50S ribosomal subunit; part of the 5S rRNA/L5/L18/L25 subcomplex. Contacts the 5S rRNA. Binds to the 5S rRNA independently of L5 and L18.

This is one of the proteins that binds to the 5S RNA in the ribosome where it forms part of the central protuberance. The polypeptide is Large ribosomal subunit protein bL25 (Thermus thermophilus (strain ATCC BAA-163 / DSM 7039 / HB27)).